Reading from the N-terminus, the 880-residue chain is Alanine--tRNA ligase (880 aa).

Residues His-571, His-575, Cys-673, and His-677 each contribute to the Zn(2+) site.

This sequence belongs to the class-II aminoacyl-tRNA synthetase family. The cofactor is Zn(2+).

The protein resides in the cytoplasm. It catalyses the reaction tRNA(Ala) + L-alanine + ATP = L-alanyl-tRNA(Ala) + AMP + diphosphate. In terms of biological role, catalyzes the attachment of alanine to tRNA(Ala) in a two-step reaction: alanine is first activated by ATP to form Ala-AMP and then transferred to the acceptor end of tRNA(Ala). Also edits incorrectly charged Ser-tRNA(Ala) and Gly-tRNA(Ala) via its editing domain. This Oleidesulfovibrio alaskensis (strain ATCC BAA-1058 / DSM 17464 / G20) (Desulfovibrio alaskensis) protein is Alanine--tRNA ligase.